The primary structure comprises 169 residues: Anaerobic nitrite reductase NSHB2 (169 aa).

One can recognise a Globin domain in the interval 16-166 (SFSEEQEALV…LVAAIKQEMK (151 aa)). Residues 49 to 53 (EVAPS) carry the Homodimerization motif. Heme b-binding residues include S59, K73, H77, R107, T111, and H112. The short motif at 119 to 131 (DAHFEVTRFALLE) is the Homodimerization element.

This sequence belongs to the plant globin family. As to quaternary structure, homodimer. Requires heme b as cofactor. In terms of tissue distribution, expressed in leaves, but not in roots. Present in embryonic organs including embryos, coleoptiles and seminal roots.

It is found in the cytoplasm. It localises to the nucleus. The enzyme catalyses Fe(III)-heme b-[protein] + nitric oxide + H2O = Fe(II)-heme b-[protein] + nitrite + 2 H(+). Phytoglobin that reduces nitrite to nitric oxide under anoxic conditions (e.g. during flooding or in waterlogged soil). May not function as an oxygen storage or transport protein. Has an unusually high affinity for O(2) through an hexacoordinate heme iron because of a very low dissociation constant. Promotes tolerance to low potassium K(+) conditions. In Oryza sativa subsp. japonica (Rice), this protein is Anaerobic nitrite reductase NSHB2.